We begin with the raw amino-acid sequence, 427 residues long: Inward rectifier potassium channel 2 (427 aa).

Topologically, residues 1–81 are cytoplasmic; it reads MGSVRTNRYS…IFTTCVDIRW (81 aa). Cysteine 76 is subject to S-nitrosocysteine. Residues 82 to 106 traverse the membrane as a helical segment; that stretch reads RWMLVIFCLAFVLSWLFFGCVFWLI. Topologically, residues 107–128 are extracellular; that stretch reads ALLHGDLDASKESKACVSEVNS. The segment at residues 129–140 is an intramembrane region (helical; Pore-forming); sequence FTAAFLFSIETQ. Residues 141–147 constitute an intramembrane region (pore-forming); the sequence is TTIGYGF. Residues 142–147 carry the Selectivity filter motif; sequence TIGYGF. Residues 148 to 156 lie on the Extracellular side of the membrane; sequence RCVTDECPV. Residues 157–178 traverse the membrane as a helical segment; sequence AVFMVVFQSIVGCIIDAFIIGA. At 179–427 the chain is on the cytoplasmic side; it reads VMAKMAKPKK…PRPLRRESEI (249 aa). Positions 181-208 are polyphosphoinositide (PIP2)-binding; sequence AKMAKPKKRNETLVFSHNAVIAMRDGKL. The tract at residues 384–427 is disordered; the sequence is SKEEDDSENGVPESTSTDTPPDIDLHNQASVPLEPRPLRRESEI. A PDZ-binding motif is present at residues 425 to 427; that stretch reads SEI.

It belongs to the inward rectifier-type potassium channel (TC 1.A.2.1) family. KCNJ2 subfamily. Homotetramer. Homomultimeric and heteromultimeric association with KCNJ4/Kir2.3. Can form heteromeric channels with Kir2.6/KCNJ18. Associates, via its PDZ-recognition domain, with a complex containing LIN7A, LIN7B, LIN7C, DLG1, CASK and APBA1. In terms of processing, S-nitrosylation increases the open probability and inward rectifying currents.

The protein localises to the cell membrane. It localises to the sarcolemma. Its subcellular location is the T-tubule. The catalysed reaction is K(+)(in) = K(+)(out). With respect to regulation, activated by phosphatidylinositol 4,5 biphosphate (PtdIns(4,5)P2). Functionally, inward rectifier potassium channels are characterized by a greater tendency to allow potassium to flow into the cell rather than out of it. Their voltage dependence is regulated by the concentration of extracellular potassium; as external potassium is raised, the voltage range of the channel opening shifts to more positive voltages. The inward rectification is mainly due to the blockage of outward current by internal magnesium. Can be blocked by extracellular barium and cesium. Probably participates in establishing action potential waveform and excitability of neuronal and muscle tissues. The chain is Inward rectifier potassium channel 2 (KCNJ2) from Bos taurus (Bovine).